The sequence spans 313 residues: Phosphate import ATP-binding protein PstB 2 (313 aa).

Residues Met-1–Gly-33 show a composition bias toward polar residues. A disordered region spans residues Met-1 to Arg-40. Residues Leu-54–Ile-308 enclose the ABC transporter domain. Residue Gly-86–Ser-93 participates in ATP binding.

Belongs to the ABC transporter superfamily. Phosphate importer (TC 3.A.1.7) family. In terms of assembly, the complex is composed of two ATP-binding proteins (PstB), two transmembrane proteins (PstC and PstA) and a solute-binding protein (PstS).

Its subcellular location is the cell membrane. The catalysed reaction is phosphate(out) + ATP + H2O = ADP + 2 phosphate(in) + H(+). Its function is as follows. Part of the ABC transporter complex PstSACB involved in phosphate import. Responsible for energy coupling to the transport system. This is Phosphate import ATP-binding protein PstB 2 from Haloarcula marismortui (strain ATCC 43049 / DSM 3752 / JCM 8966 / VKM B-1809) (Halobacterium marismortui).